The following is a 127-amino-acid chain: Small ribosomal subunit protein uS12 (127 aa).

Residues 11–20 (GRKPKKKKSK) show a composition bias toward basic residues. Positions 11-30 (GRKPKKKKSKAPALQGNPQK) are disordered. D89 is modified (3-methylthioaspartic acid). The disordered stretch occupies residues 105 to 127 (AGVEGRRQSRSKYGAKRPKDQKK). Basic residues predominate over residues 112-127 (QSRSKYGAKRPKDQKK).

Belongs to the universal ribosomal protein uS12 family. Part of the 30S ribosomal subunit. Contacts proteins S8 and S17. May interact with IF1 in the 30S initiation complex.

With S4 and S5 plays an important role in translational accuracy. Functionally, interacts with and stabilizes bases of the 16S rRNA that are involved in tRNA selection in the A site and with the mRNA backbone. Located at the interface of the 30S and 50S subunits, it traverses the body of the 30S subunit contacting proteins on the other side and probably holding the rRNA structure together. The combined cluster of proteins S8, S12 and S17 appears to hold together the shoulder and platform of the 30S subunit. The chain is Small ribosomal subunit protein uS12 from Thermotoga maritima (strain ATCC 43589 / DSM 3109 / JCM 10099 / NBRC 100826 / MSB8).